The chain runs to 457 residues: Cysteine--tRNA ligase (457 aa).

Position 27 (C27) interacts with Zn(2+). The 'HIGH' region signature appears at 29 to 39; the sequence is ITPQSEPHIGH. The Zn(2+) site is built by C207, H232, and E236. The 'KMSKS' region motif lies at 265 to 269; it reads KMSKS. K268 contributes to the ATP binding site.

Belongs to the class-I aminoacyl-tRNA synthetase family. As to quaternary structure, monomer. The cofactor is Zn(2+).

Its subcellular location is the cytoplasm. The enzyme catalyses tRNA(Cys) + L-cysteine + ATP = L-cysteinyl-tRNA(Cys) + AMP + diphosphate. The polypeptide is Cysteine--tRNA ligase (Dehalococcoides mccartyi (strain ATCC BAA-2100 / JCM 16839 / KCTC 5957 / BAV1)).